Consider the following 407-residue polypeptide: MSGRHRKPTTSNVSVAKIAFTGAVLGGGGIAMAAQATAATDGEWDQVARCESGGNWSINTGNGYLGGLQFTQSTWAAHGGGEFAPSAQLASREQQIAVGERVLATQGRGAWPVCGRGLSNATPREVLPASAAMDAPLDAAAVNGEPAPLAPPPADPAPPVELAANDLPAPLGEPLPAAPADPAPPADLAPPAPADVAPPVELAVNDLPAPLGEPLPAAPADPAPPADLAPPAPADLAPPAPADLAPPAPADLAPPVELAVNDLPAPLGEPLPAAPAELAPPADLAPASADLAPPAPADLAPPAPAELAPPAPADLAPPAAVNEQTAPGDQPATAPGGPVGLATDLELPEPDPQPADAPPPGDVTEAPAETPQVSNIAYTKKLWQAIRAQDVCGNDALDSLAQPYVIG.

The signal sequence occupies residues 1–33 (MSGRHRKPTTSNVSVAKIAFTGAVLGGGGIAMA). Disordered stretches follow at residues 142 to 253 (VNGE…ADLA) and 271 to 371 (LPAA…AETP). The span at 148 to 159 (PLAPPPADPAPP) shows a compositional bias: pro residues. The segment covering 160 to 170 (VELAANDLPAP) has biased composition (low complexity). Positions 171-193 (LGEPLPAAPADPAPPADLAPPAP) are enriched in pro residues. Tandem repeats lie at residues 178–185 (APADPAPP) and 186–193 (ADLAPPAP). The 12 X 8 AA approximate repeats of A-P-A-D-L-A-P-P stretch occupies residues 178–359 (APADPAPPAD…PDPQPADAPP (182 aa)). Low complexity predominate over residues 194 to 210 (ADVAPPVELAVNDLPAP). A compositionally biased stretch (pro residues) spans 211–249 (LGEPLPAAPADPAPPADLAPPAPADLAPPAPADLAPPAP). Repeat copies occupy residues 218–225 (APADPAPP), 226–233 (ADLAPPAP), 240–247 (APADLAPP), 248–255 (APADLAPP), 274–281 (APAELAPP), 287–294 (ASADLAPP), 295–302 (APADLAPP), 303–310 (APAELAPP), 311–318 (APADLAPP), and 353–359 (QPADAPP). Positions 274-292 (APAELAPPADLAPASADLA) are enriched in low complexity. Composition is skewed to pro residues over residues 293-312 (PPAP…PPAP) and 350-361 (PDPQPADAPPPG).

This sequence belongs to the transglycosylase family. Rpf subfamily.

Functionally, factor that stimulates resuscitation of dormant cells. Has peptidoglycan (PG) hydrolytic activity. The sequence is that of Resuscitation-promoting factor RpfA (rpfA) from Mycobacterium tuberculosis (strain CDC 1551 / Oshkosh).